The following is a 120-amino-acid chain: Response regulator receiver protein CpdR (120 aa).

Residues 3–117 (RILLAEDDND…DLVNEIEKML (115 aa)) enclose the Response regulatory domain. Asp-52 bears the 4-aspartylphosphate mark.

In terms of processing, is phosphorylated by ChpT-P on Asp-52.

The protein localises to the cytoplasm. Its function is as follows. Component of a regulatory phosphorelay system that controls B.abortus cell growth, division, and intracellular survival inside mammalian host cells. This signaling pathway is composed of CckA, ChpT, CtrA and CpdR. CpdR is a response regulator substrate of ChpT. Unphosphorylated CpdR controls steady-state levels of CtrA in the B.abortus cell, likely via CtrA destabilization and activation of its proteolysis. This Brucella abortus (strain 2308) protein is Response regulator receiver protein CpdR.